Here is a 182-residue protein sequence, read N- to C-terminus: NAD(P)H-quinone oxidoreductase subunit J (182 aa).

This sequence belongs to the complex I 30 kDa subunit family. In terms of assembly, NDH-1 can be composed of about 15 different subunits; different subcomplexes with different compositions have been identified which probably have different functions.

The protein resides in the cellular thylakoid membrane. It carries out the reaction a plastoquinone + NADH + (n+1) H(+)(in) = a plastoquinol + NAD(+) + n H(+)(out). The enzyme catalyses a plastoquinone + NADPH + (n+1) H(+)(in) = a plastoquinol + NADP(+) + n H(+)(out). Functionally, NDH-1 shuttles electrons from an unknown electron donor, via FMN and iron-sulfur (Fe-S) centers, to quinones in the respiratory and/or the photosynthetic chain. The immediate electron acceptor for the enzyme in this species is believed to be plastoquinone. Couples the redox reaction to proton translocation, and thus conserves the redox energy in a proton gradient. Cyanobacterial NDH-1 also plays a role in inorganic carbon-concentration. The protein is NAD(P)H-quinone oxidoreductase subunit J of Synechococcus sp. (strain WH7803).